Here is a 93-residue protein sequence, read N- to C-terminus: MPRSLKKGPFVDDHLLKKVDVQNEKNTKQVIKTWSRRSTIIPDFIGHTFAVHDGRKHVPVFVTESMVGHKLGEFAPTRTFKGHIKDDRKSKRR.

It belongs to the universal ribosomal protein uS19 family.

In terms of biological role, protein S19 forms a complex with S13 that binds strongly to the 16S ribosomal RNA. This Mycobacterium marinum (strain ATCC BAA-535 / M) protein is Small ribosomal subunit protein uS19.